The sequence spans 115 residues: Immunoglobulin kappa variable 5-48 (115 aa).

Positions 1–20 are cleaved as a signal peptide; that stretch reads MVSTPQFLVFLLFWIPASRG. The segment at 21 to 43 is framework-1; it reads DILLTQSPAILSVSPGERVSFSC. C43 and C108 form a disulfide bridge. The segment at 44–54 is complementarity-determining-1; sequence RASQSIGTSIH. Residues 55–69 form a framework-2 region; sequence WYQQRTNGSPRLLIK. Positions 70–76 are complementarity-determining-2; it reads YASESIS. The framework-3 stretch occupies residues 77-108; the sequence is GIPSRFSGSGSGTDFTLSINSVESEDIADYYC. Positions 109–115 are complementarity-determining-3; the sequence is QQSNSWP.

This Mus musculus (Mouse) protein is Immunoglobulin kappa variable 5-48.